The primary structure comprises 352 residues: N-acetyl-gamma-glutamyl-phosphate reductase (352 aa).

Residue cysteine 155 is part of the active site.

This sequence belongs to the NAGSA dehydrogenase family. Type 1 subfamily.

The protein resides in the cytoplasm. It carries out the reaction N-acetyl-L-glutamate 5-semialdehyde + phosphate + NADP(+) = N-acetyl-L-glutamyl 5-phosphate + NADPH + H(+). It participates in amino-acid biosynthesis; L-arginine biosynthesis; N(2)-acetyl-L-ornithine from L-glutamate: step 3/4. Functionally, catalyzes the NADPH-dependent reduction of N-acetyl-5-glutamyl phosphate to yield N-acetyl-L-glutamate 5-semialdehyde. The polypeptide is N-acetyl-gamma-glutamyl-phosphate reductase (Brachyspira hyodysenteriae (strain ATCC 49526 / WA1)).